The following is a 487-amino-acid chain: N-succinylglutamate 5-semialdehyde dehydrogenase (487 aa).

Residue 221–226 (GSSRTG) coordinates NAD(+). Catalysis depends on residues Glu-244 and Cys-278.

It belongs to the aldehyde dehydrogenase family. AstD subfamily.

It catalyses the reaction N-succinyl-L-glutamate 5-semialdehyde + NAD(+) + H2O = N-succinyl-L-glutamate + NADH + 2 H(+). It participates in amino-acid degradation; L-arginine degradation via AST pathway; L-glutamate and succinate from L-arginine: step 4/5. Catalyzes the NAD-dependent reduction of succinylglutamate semialdehyde into succinylglutamate. This is N-succinylglutamate 5-semialdehyde dehydrogenase (astD) from Pseudomonas aeruginosa (strain ATCC 15692 / DSM 22644 / CIP 104116 / JCM 14847 / LMG 12228 / 1C / PRS 101 / PAO1).